The primary structure comprises 262 residues: Thrombin-like enzyme calobin-1 (262 aa).

Positions 1–18 are cleaved as a signal peptide; sequence MVLISVLANLLILQLSYA. Positions 19–24 are excised as a propeptide; sequence QKSSEL. The region spanning 25–253 is the Peptidase S1 domain; sequence VIGGDECNIN…HLDWIQSIIA (229 aa). Disulfide bonds link Cys31-Cys165, Cys52-Cys68, Cys100-Cys260, Cys144-Cys214, Cys176-Cys193, and Cys204-Cys229. His67 functions as the Charge relay system in the catalytic mechanism. The N-linked (GlcNAc...) asparagine glycan is linked to Asn105. The Charge relay system role is filled by Asp112. The Charge relay system role is filled by Ser208.

This sequence belongs to the peptidase S1 family. Snake venom subfamily. Monomer. Post-translationally, N-glycosylated. Expressed by the venom gland.

Its subcellular location is the secreted. Strongly inhibited by PMSF, and moderately by benzamidine and soybean trypsin inhibitor. Functionally, thrombin-like snake venom serine protease. Has a coagulant activity. Acts on alpha-chains of fibrinogen (FGA) generating fibrinopeptide A. The chain is Thrombin-like enzyme calobin-1 from Gloydius ussuriensis (Ussuri mamushi).